A 100-amino-acid polypeptide reads, in one-letter code: Small ribosomal subunit protein uS14c (100 aa).

The protein belongs to the universal ribosomal protein uS14 family. As to quaternary structure, part of the 30S ribosomal subunit.

Its subcellular location is the plastid. The protein localises to the chloroplast. In terms of biological role, binds 16S rRNA, required for the assembly of 30S particles. The sequence is that of Small ribosomal subunit protein uS14c from Psilotum nudum (Whisk fern).